Reading from the N-terminus, the 353-residue chain is Photosystem II protein D1 (353 aa).

Threonine 2 is modified (N-acetylthreonine). Threonine 2 carries the post-translational modification Phosphothreonine. The next 3 membrane-spanning stretches (helical) occupy residues 29–46 (YIGW…TATS), 118–133 (HFLL…EWEL), and 142–156 (WIAV…AATA). A chlorophyll a-binding site is contributed by histidine 118. Tyrosine 126 is a pheophytin a binding site. Residues aspartate 170 and glutamate 189 each contribute to the [CaMn4O5] cluster site. A helical membrane pass occupies residues 197–218 (FHMLGVAGVFGGSLFSAMHGSL). Histidine 198 is a binding site for chlorophyll a. A quinone is bound by residues histidine 215 and 264–265 (SF). Histidine 215 contacts Fe cation. Histidine 272 contacts Fe cation. The chain crosses the membrane as a helical span at residues 274–288 (FLAAWPVVGIWFTAL). 4 residues coordinate [CaMn4O5] cluster: histidine 332, glutamate 333, aspartate 342, and alanine 344. The propeptide occupies 345–353 (AMEAPSVNG).

It belongs to the reaction center PufL/M/PsbA/D family. PSII is composed of 1 copy each of membrane proteins PsbA, PsbB, PsbC, PsbD, PsbE, PsbF, PsbH, PsbI, PsbJ, PsbK, PsbL, PsbM, PsbT, PsbX, PsbY, PsbZ, Psb30/Ycf12, at least 3 peripheral proteins of the oxygen-evolving complex and a large number of cofactors. It forms dimeric complexes. It depends on The D1/D2 heterodimer binds P680, chlorophylls that are the primary electron donor of PSII, and subsequent electron acceptors. It shares a non-heme iron and each subunit binds pheophytin, quinone, additional chlorophylls, carotenoids and lipids. D1 provides most of the ligands for the Mn4-Ca-O5 cluster of the oxygen-evolving complex (OEC). There is also a Cl(-1) ion associated with D1 and D2, which is required for oxygen evolution. The PSII complex binds additional chlorophylls, carotenoids and specific lipids. as a cofactor. In terms of processing, tyr-161 forms a radical intermediate that is referred to as redox-active TyrZ, YZ or Y-Z. Post-translationally, C-terminally processed by CTPA; processing is essential to allow assembly of the oxygen-evolving complex and thus photosynthetic growth.

The protein localises to the plastid. It localises to the chloroplast thylakoid membrane. It carries out the reaction 2 a plastoquinone + 4 hnu + 2 H2O = 2 a plastoquinol + O2. Photosystem II (PSII) is a light-driven water:plastoquinone oxidoreductase that uses light energy to abstract electrons from H(2)O, generating O(2) and a proton gradient subsequently used for ATP formation. It consists of a core antenna complex that captures photons, and an electron transfer chain that converts photonic excitation into a charge separation. The D1/D2 (PsbA/PsbD) reaction center heterodimer binds P680, the primary electron donor of PSII as well as several subsequent electron acceptors. This chain is Photosystem II protein D1, found in Phaseolus vulgaris (Kidney bean).